Here is a 325-residue protein sequence, read N- to C-terminus: Adenine deaminase (325 aa).

Zn(2+) is bound by residues His-11, His-13, and His-189. The active-site Proton donor is the Glu-192. Asp-270 serves as a coordination point for Zn(2+). A substrate-binding site is contributed by Asp-271.

It belongs to the metallo-dependent hydrolases superfamily. Adenosine and AMP deaminases family. Adenine deaminase type 2 subfamily. Requires Zn(2+) as cofactor.

It catalyses the reaction adenine + H2O + H(+) = hypoxanthine + NH4(+). Functionally, catalyzes the hydrolytic deamination of adenine to hypoxanthine. Plays an important role in the purine salvage pathway and in nitrogen catabolism. The protein is Adenine deaminase of Agrobacterium fabrum (strain C58 / ATCC 33970) (Agrobacterium tumefaciens (strain C58)).